A 344-amino-acid chain; its full sequence is Biotin synthase (344 aa).

The Radical SAM core domain occupies 40–267 (AQVQVSTLLS…KSMVRLSAGR (228 aa)). Residues C55, C59, and C62 each contribute to the [4Fe-4S] cluster site. C99, C130, C190, and R262 together coordinate [2Fe-2S] cluster.

Belongs to the radical SAM superfamily. Biotin synthase family. As to quaternary structure, homodimer. [4Fe-4S] cluster is required as a cofactor. The cofactor is [2Fe-2S] cluster.

It catalyses the reaction (4R,5S)-dethiobiotin + (sulfur carrier)-SH + 2 reduced [2Fe-2S]-[ferredoxin] + 2 S-adenosyl-L-methionine = (sulfur carrier)-H + biotin + 2 5'-deoxyadenosine + 2 L-methionine + 2 oxidized [2Fe-2S]-[ferredoxin]. It functions in the pathway cofactor biosynthesis; biotin biosynthesis; biotin from 7,8-diaminononanoate: step 2/2. In terms of biological role, catalyzes the conversion of dethiobiotin (DTB) to biotin by the insertion of a sulfur atom into dethiobiotin via a radical-based mechanism. The protein is Biotin synthase of Xanthomonas axonopodis pv. citri (strain 306).